We begin with the raw amino-acid sequence, 405 residues long: NAC transcription factor NAM-A1 (405 aa).

Over residues 1–10 (MGSSDSSSGS) the composition is skewed to low complexity. Positions 1-38 (MGSSDSSSGSAQKAARHQHEPPPPRQRGSAPELPPGFR) are disordered. The region spanning 33-204 (LPPGFRFHPT…DWVLCRIYKK (172 aa)) is the NAC domain. Residues 137–210 (LGVKKALVFY…IYKKINKAAA (74 aa)) mediate DNA binding.

Expressed in flag leaves, green spikes and peduncles.

It is found in the nucleus. In terms of biological role, transcription factor of the NAC family associated with the grain protein content (GPC). Accelerates senescence and increases nutrient remobilization from leaves to developing grains. The tetraploid cultivated wheat (T.durum) contains one additional gene coding for a functional protein (NAM-B2) and one extra pseudogene (NAM-B1). This chain is NAC transcription factor NAM-A1 (NAM-A1), found in Triticum turgidum subsp. durum (Durum wheat).